The following is a 216-amino-acid chain: Elongation factor Ts (216 aa).

Residues 81-84 (TDFV) form an involved in Mg(2+) ion dislocation from EF-Tu region.

The protein belongs to the EF-Ts family.

It is found in the cytoplasm. In terms of biological role, associates with the EF-Tu.GDP complex and induces the exchange of GDP to GTP. It remains bound to the aminoacyl-tRNA.EF-Tu.GTP complex up to the GTP hydrolysis stage on the ribosome. The polypeptide is Elongation factor Ts (Geotalea daltonii (strain DSM 22248 / JCM 15807 / FRC-32) (Geobacter daltonii)).